A 330-amino-acid chain; its full sequence is GTPase Obg (330 aa).

The Obg domain occupies 1–159 (MHFIDEVKIY…MWIHLSLKLL (159 aa)). Residues 160–327 (SDVGLVGLPN…IVKLALETIK (168 aa)) form the OBG-type G domain. GTP is bound by residues 166–173 (GLPNAGKS), 191–195 (FTTLV), 212–215 (DIPG), 279–282 (NKCD), and 308–310 (STC). Mg(2+) contacts are provided by serine 173 and threonine 193.

The protein belongs to the TRAFAC class OBG-HflX-like GTPase superfamily. OBG GTPase family. As to quaternary structure, monomer. The cofactor is Mg(2+).

It is found in the cytoplasm. In terms of biological role, an essential GTPase which binds GTP, GDP and possibly (p)ppGpp with moderate affinity, with high nucleotide exchange rates and a fairly low GTP hydrolysis rate. Plays a role in control of the cell cycle, stress response, ribosome biogenesis and in those bacteria that undergo differentiation, in morphogenesis control. The polypeptide is GTPase Obg (Rickettsia rickettsii (strain Iowa)).